Reading from the N-terminus, the 1129-residue chain is Phytochrome A type 4 (1129 aa).

A compositionally biased stretch (low complexity) spans 1–21 (MSSSRPASSSSSRNRQSSRAR). The segment at 1 to 24 (MSSSRPASSSSSRNRQSSRARVLA) is disordered. The GAF domain maps to 217–402 (SMEVLCNTVV…VFAVHVNREF (186 aa)). Cysteine 322 provides a ligand contact to phytochromobilin. 2 consecutive PAS domains span residues 618–688 (VTSE…LQGK) and 748–822 (VEGD…VSLC). Residues 902-1122 (YMRHAINNPL…TFILTAELAS (221 aa)) form the Histidine kinase domain.

Belongs to the phytochrome family. Homodimer. In terms of processing, contains one covalently linked phytochromobilin chromophore.

Regulatory photoreceptor which exists in two forms that are reversibly interconvertible by light: the Pr form that absorbs maximally in the red region of the spectrum and the Pfr form that absorbs maximally in the far-red region. Photoconversion of Pr to Pfr induces an array of morphogenic responses, whereas reconversion of Pfr to Pr cancels the induction of those responses. Pfr controls the expression of a number of nuclear genes including those encoding the small subunit of ribulose-bisphosphate carboxylase, chlorophyll A/B binding protein, protochlorophyllide reductase, rRNA, etc. It also controls the expression of its own gene(s) in a negative feedback fashion. The chain is Phytochrome A type 4 (PHYA4) from Avena sativa (Oat).